We begin with the raw amino-acid sequence, 921 residues long: Isoleucine--tRNA ligase (921 aa).

Residues 57 to 67 (PYANGDIHMGH) carry the 'HIGH' region motif. Position 553 (glutamate 553) interacts with L-isoleucyl-5'-AMP. Residues 594 to 598 (KMSKS) carry the 'KMSKS' region motif. Lysine 597 serves as a coordination point for ATP.

The protein belongs to the class-I aminoacyl-tRNA synthetase family. IleS type 1 subfamily. Monomer.

It localises to the cytoplasm. The enzyme catalyses tRNA(Ile) + L-isoleucine + ATP = L-isoleucyl-tRNA(Ile) + AMP + diphosphate. In terms of biological role, catalyzes the attachment of isoleucine to tRNA(Ile). As IleRS can inadvertently accommodate and process structurally similar amino acids such as valine, to avoid such errors it has two additional distinct tRNA(Ile)-dependent editing activities. One activity is designated as 'pretransfer' editing and involves the hydrolysis of activated Val-AMP. The other activity is designated 'posttransfer' editing and involves deacylation of mischarged Val-tRNA(Ile). This chain is Isoleucine--tRNA ligase, found in Bacillus subtilis (strain 168).